We begin with the raw amino-acid sequence, 66 residues long: Large ribosomal subunit protein uL29 (66 aa).

This sequence belongs to the universal ribosomal protein uL29 family.

The sequence is that of Large ribosomal subunit protein uL29 from Brucella abortus (strain S19).